We begin with the raw amino-acid sequence, 97 residues long: Putative pterin-4-alpha-carbinolamine dehydratase (97 aa).

The protein belongs to the pterin-4-alpha-carbinolamine dehydratase family.

It carries out the reaction (4aS,6R)-4a-hydroxy-L-erythro-5,6,7,8-tetrahydrobiopterin = (6R)-L-erythro-6,7-dihydrobiopterin + H2O. This chain is Putative pterin-4-alpha-carbinolamine dehydratase, found in Phenylobacterium zucineum (strain HLK1).